Here is a 445-residue protein sequence, read N- to C-terminus: Serine/threonine-protein kinase Nek2 (445 aa).

A Protein kinase domain is found at 8 to 271 (YEVLYTIGTG…VEEILENPLI (264 aa)). ATP is bound by residues 14–22 (IGTGSYGRC) and lysine 37. Catalysis depends on aspartate 141, which acts as the Proton acceptor. Position 170 is a phosphothreonine; by autocatalysis (threonine 170). A Phosphoserine; by autocatalysis modification is found at serine 171. 2 positions are modified to phosphothreonine; by autocatalysis: threonine 175 and threonine 179. At serine 184 the chain carries Phosphoserine. Phosphoserine; by autocatalysis is present on serine 241. Residues 264 to 445 (EILENPLIAD…LKSRQILGMR (182 aa)) form an interaction with PCNT region. 2 positions are modified to phosphoserine: serine 296 and serine 300. An interaction with CEP85 region spans residues 301–445 (PVLSELKLKE…LKSRQILGMR (145 aa)). Positions 303–362 (LSELKLKEIQLQERERALKAREERLEQKEQELCVRERLAEDKLARAENLLKNYSLLKERK) form a coiled coil. Residues 306-334 (LKLKEIQLQERERALKAREERLEQKEQEL) form a leucine-zipper region. Positions 329–445 (QKEQELCVRE…LKSRQILGMR (117 aa)) are necessary for interaction with MAD1L1. A required for microtubule binding and for localization to the centrosomes region spans residues 333-370 (ELCVRERLAEDKLARAENLLKNYSLLKERKFLSLASNP). Residues serine 356 and serine 365 each carry the phosphoserine; by STK3/MST2 modification. Serine 387, serine 390, serine 397, and serine 402 each carry phosphoserine. The interval 403–439 (QLTSKSKCKDLKKRLHAAQLRAQALSDIEKNYQLKSR) is interaction with SAV1 and STK3/MST2. Phosphoserine; by STK3/MST2 is present on serine 406. Residues 406-430 (SKSKCKDLKKRLHAAQLRAQALSDI) are a coiled coil. Serine 428 carries the post-translational modification Phosphoserine. Serine 438 bears the Phosphoserine; by STK3/MST2 mark.

This sequence belongs to the protein kinase superfamily. NEK Ser/Thr protein kinase family. NIMA subfamily. Isoform 1, isoform 2 and isoform 4 form homo- and heterodimers. Interacts with NECAB3 and HMGA2. Isoform 1 interacts with CDC20, CTNB1, MAD1L1, MAPK, NEK11, NPM1, NDC80, PCNT and SGO1. Isoform 1 interacts with STK3/MST2 (via SARAH domain) and SAV1 (via SARAH domain). Isoform 1 and isoform 2 interact with MAD2L1. Isoform 1 and isoform 4 interact with PPP1CA and PPP1CC. Interacts with CEP68; the interaction leads to phosphorylation of CEP68. Interacts with CNTLN; the interaction leads to phosphorylation of CNTLN. Isoform 1 interacts with CEP85. Interacts with CCDC102B; the interaction leads to phosphorylation of CCDC102B. Mg(2+) is required as a cofactor. Activated by autophosphorylation. Protein phosphatase 1 represses autophosphorylation and activation of isoform 1 by dephosphorylation. Phosphorylation by STK3/MST2 is necessary for its localization to the centrosome. In terms of tissue distribution, isoform 1 and isoform 2 are expressed in peripheral blood T-cells and a wide variety of transformed cell types. Isoform 1 and isoform 4 are expressed in the testis. Up-regulated in various cancer cell lines, as well as primary breast tumors.

It localises to the nucleus. Its subcellular location is the nucleolus. It is found in the cytoplasm. The protein resides in the cytoskeleton. The protein localises to the microtubule organizing center. It localises to the centrosome. Its subcellular location is the spindle pole. It is found in the chromosome. The protein resides in the centromere. The protein localises to the kinetochore. It catalyses the reaction L-seryl-[protein] + ATP = O-phospho-L-seryl-[protein] + ADP + H(+). The catalysed reaction is L-threonyl-[protein] + ATP = O-phospho-L-threonyl-[protein] + ADP + H(+). Isoform 1 is inhibited by ionizing radiation in the presence of PPP1CA. Its catalytic activity is inhibited by the inhibitor CCT241950. In the presence of this inhibitor, displays an autoinhibited conformation: Tyr-70 side chain points into the active site, interacts with the activation loop, and blocks the alphaC helix. Its function is as follows. Protein kinase which is involved in the control of centrosome separation and bipolar spindle formation in mitotic cells and chromatin condensation in meiotic cells. Regulates centrosome separation (essential for the formation of bipolar spindles and high-fidelity chromosome separation) by phosphorylating centrosomal proteins such as CROCC, CEP250 and NINL, resulting in their displacement from the centrosomes. Regulates kinetochore microtubule attachment stability in mitosis via phosphorylation of NDC80. Involved in regulation of mitotic checkpoint protein complex via phosphorylation of CDC20 and MAD2L1. Plays an active role in chromatin condensation during the first meiotic division through phosphorylation of HMGA2. Phosphorylates: PPP1CC; SGO1; NECAB3 and NPM1. Essential for localization of MAD2L1 to kinetochore and MAPK1 and NPM1 to the centrosome. Phosphorylates CEP68 and CNTLN directly or indirectly. NEK2-mediated phosphorylation of CEP68 promotes CEP68 dissociation from the centrosome and its degradation at the onset of mitosis. Involved in the regulation of centrosome disjunction. Phosphorylates CCDC102B either directly or indirectly which causes CCDC102B to dissociate from the centrosome and allows for centrosome separation. Phosphorylates and activates NEK11 in G1/S-arrested cells. In terms of biological role, not present in the nucleolus and, in contrast to isoform 1, does not phosphorylate and activate NEK11 in G1/S-arrested cells. The sequence is that of Serine/threonine-protein kinase Nek2 (NEK2) from Homo sapiens (Human).